The following is a 100-amino-acid chain: Large ribosomal subunit protein uL23 (100 aa).

The protein belongs to the universal ribosomal protein uL23 family. As to quaternary structure, part of the 50S ribosomal subunit. Contacts protein L29, and trigger factor when it is bound to the ribosome.

Its function is as follows. One of the early assembly proteins it binds 23S rRNA. One of the proteins that surrounds the polypeptide exit tunnel on the outside of the ribosome. Forms the main docking site for trigger factor binding to the ribosome. This chain is Large ribosomal subunit protein uL23, found in Synechococcus sp. (strain CC9605).